Here is a 125-residue protein sequence, read N- to C-terminus: Scinderin (125 aa).

Tyr-13 carries the post-translational modification Phosphotyrosine. A 1,2-diacyl-sn-glycero-3-phospho-(1D-myo-inositol-4,5-bisphosphate)-binding positions include 23 to 30 and 49 to 57; these read KGGLKYKA and RLLHVKGRR. The stretch at 59 to 99 is one Gelsolin-like 1 repeat; sequence VRATEVPLSWDSFNKGDCFIIDLGSEIYQWFGSSCNKYERL.

It belongs to the villin/gelsolin family.

It localises to the cytoplasm. The protein localises to the cytoskeleton. It is found in the cell projection. Its subcellular location is the podosome. In terms of biological role, ca(2+)-dependent actin filament-severing protein that has a regulatory function in exocytosis by affecting the organization of the microfilament network underneath the plasma membrane. In vitro, also has barbed end capping and nucleating activities in the presence of Ca(2+). Severing activity is inhibited by phosphatidylinositol 4,5-bis-phosphate (PIP2). Required for megakaryocyte differentiation, maturation, polyploidization and apoptosis with the release of platelet-like particles. Plays a role in osteoclastogenesis (OCG) and actin cytoskeletal organization in osteoclasts. Regulates chondrocyte proliferation and differentiation. Inhibits cell proliferation and tumorigenesis. Signaling is mediated by MAPK, p38 and JNK pathways. The sequence is that of Scinderin (SCIN) from Sus scrofa (Pig).